The following is a 192-amino-acid chain: Ferritin-like protein (192 aa).

Fe(3+)-binding residues include His-44, Glu-48, and His-102. The linker stretch occupies residues Arg-143–Ala-179. Positions Ala-149–Ala-163 are enriched in basic and acidic residues. Residues Ala-149–Gln-192 form a disordered region. The segment at His-180 to Gln-192 is targeting peptide.

In terms of assembly, homodimer, with 2 Fe atoms bound at the subunit interface (without encapsulin), probably also a dimer when encapsulated. 42 electron-dense accretions can be seen inside the nanocompartment which are probably this cargo protein, although perhaps up to one cargo dimer can be bound per shell protein.

The protein resides in the encapsulin nanocompartment. The catalysed reaction is 4 Fe(2+) + O2 + 4 H(+) = 4 Fe(3+) + 2 H2O. In terms of biological role, cargo protein of a type 1 encapsulin nanocompartment. A ferritin-like iron-binding protein probably involved in iron mineralization in the encapsulin nanocompartment. Has ferroxidase activity even when encapsulated, the rate is probably controlled by the rate of Fe flux across the nanocompartment pores. Part of the iron-mineralizing encapsulin-associated Firmicute (IMEF) system. 2 different cargo proteins have been identified (IMEF and Fer); when both are expressed in E.coli with the shell protein only IMEF is detected within the nanocompartment. E.coli expressing all 3 genes stores the largest amount of iron and is protected from Fe/H2O2-induced oxidative stress. The polypeptide is Ferritin-like protein (Bacillus thermotolerans (Quasibacillus thermotolerans)).